The following is a 444-amino-acid chain: tRNA-2-methylthio-N(6)-dimethylallyladenosine synthase (444 aa).

The region spanning K2–T119 is the MTTase N-terminal domain. [4Fe-4S] cluster contacts are provided by C11, C48, C82, C161, C165, and C168. Residues K147–R379 form the Radical SAM core domain. The 63-residue stretch at K382 to A444 folds into the TRAM domain.

This sequence belongs to the methylthiotransferase family. MiaB subfamily. In terms of assembly, monomer. The cofactor is [4Fe-4S] cluster.

Its subcellular location is the cytoplasm. The catalysed reaction is N(6)-dimethylallyladenosine(37) in tRNA + (sulfur carrier)-SH + AH2 + 2 S-adenosyl-L-methionine = 2-methylsulfanyl-N(6)-dimethylallyladenosine(37) in tRNA + (sulfur carrier)-H + 5'-deoxyadenosine + L-methionine + A + S-adenosyl-L-homocysteine + 2 H(+). Catalyzes the methylthiolation of N6-(dimethylallyl)adenosine (i(6)A), leading to the formation of 2-methylthio-N6-(dimethylallyl)adenosine (ms(2)i(6)A) at position 37 in tRNAs that read codons beginning with uridine. The chain is tRNA-2-methylthio-N(6)-dimethylallyladenosine synthase from Ruthia magnifica subsp. Calyptogena magnifica.